Here is a 232-residue protein sequence, read N- to C-terminus: 5'-methylthioadenosine/S-adenosylhomocysteine nucleosidase (232 aa).

The active-site Proton acceptor is the glutamate 12. Residues glycine 78, isoleucine 152, and methionine 173 to glutamate 174 each bind substrate. Aspartate 197 acts as the Proton donor in catalysis.

The protein belongs to the PNP/UDP phosphorylase family. MtnN subfamily. Homodimer.

It catalyses the reaction S-adenosyl-L-homocysteine + H2O = S-(5-deoxy-D-ribos-5-yl)-L-homocysteine + adenine. It carries out the reaction S-methyl-5'-thioadenosine + H2O = 5-(methylsulfanyl)-D-ribose + adenine. The enzyme catalyses 5'-deoxyadenosine + H2O = 5-deoxy-D-ribose + adenine. The protein operates within amino-acid biosynthesis; L-methionine biosynthesis via salvage pathway; S-methyl-5-thio-alpha-D-ribose 1-phosphate from S-methyl-5'-thioadenosine (hydrolase route): step 1/2. Functionally, catalyzes the irreversible cleavage of the glycosidic bond in both 5'-methylthioadenosine (MTA) and S-adenosylhomocysteine (SAH/AdoHcy) to adenine and the corresponding thioribose, 5'-methylthioribose and S-ribosylhomocysteine, respectively. Also cleaves 5'-deoxyadenosine, a toxic by-product of radical S-adenosylmethionine (SAM) enzymes, into 5-deoxyribose and adenine. Thus, is required for in vivo function of the radical SAM enzymes biotin synthase and lipoic acid synthase, that are inhibited by 5'-deoxyadenosine accumulation. The chain is 5'-methylthioadenosine/S-adenosylhomocysteine nucleosidase from Salmonella enteritidis PT4 (strain P125109).